Consider the following 161-residue polypeptide: MADVEYRCFVGGLRWATDDQSLQNAFSKYGDVIDSKIITDRETGRSRGFGFVTFASDEAMRQAIEAMNGQDLDGRNITVNEAQSRRSDGGGGFGGGGGGYGGQRREGGGGGYGGGGGGYGGGRSGGGGGYGSRDGGGGGYGGGGGGYGGSRGGSGGGNWRE.

The RRM domain maps to 6 to 84 (YRCFVGGLRW…RNITVNEAQS (79 aa)). The disordered stretch occupies residues 72 to 161 (LDGRNITVNE…GGSGGGNWRE (90 aa)). Ser87 carries the post-translational modification Phosphoserine; by PKA. Over residues 89-161 (GGGGFGGGGG…GGSGGGNWRE (73 aa)) the composition is skewed to gly residues.

Its function is as follows. Binds single-stranded DNA and homoribopolymers of guanine, uracil and adenine, but not cytosine. Also binds RNA, with a preference for RNA containing a high proportion of adenine within an open loop structure. Possibly has a role in RNA transcription or processing during stress. This is Glycine-rich RNA-binding protein blt801 from Hordeum vulgare (Barley).